Consider the following 334-residue polypeptide: Aspartate carbamoyltransferase catalytic subunit (334 aa).

Residues arginine 71 and threonine 72 each coordinate carbamoyl phosphate. An L-aspartate-binding site is contributed by lysine 99. Residues arginine 121, histidine 151, and glutamine 154 each coordinate carbamoyl phosphate. Arginine 184 and arginine 239 together coordinate L-aspartate. The carbamoyl phosphate site is built by glycine 280 and proline 281.

The protein belongs to the aspartate/ornithine carbamoyltransferase superfamily. ATCase family. As to quaternary structure, heterododecamer (2C3:3R2) of six catalytic PyrB chains organized as two trimers (C3), and six regulatory PyrI chains organized as three dimers (R2).

It carries out the reaction carbamoyl phosphate + L-aspartate = N-carbamoyl-L-aspartate + phosphate + H(+). It functions in the pathway pyrimidine metabolism; UMP biosynthesis via de novo pathway; (S)-dihydroorotate from bicarbonate: step 2/3. Its function is as follows. Catalyzes the condensation of carbamoyl phosphate and aspartate to form carbamoyl aspartate and inorganic phosphate, the committed step in the de novo pyrimidine nucleotide biosynthesis pathway. This is Aspartate carbamoyltransferase catalytic subunit from Pseudomonas syringae pv. tomato (strain ATCC BAA-871 / DC3000).